We begin with the raw amino-acid sequence, 61 residues long: Metallothionein-1F (61 aa).

Methionine 1 carries the post-translational modification N-acetylmethionine. The segment at 1–29 (MDPNCSCPTGGSCTCAGSCTCKACRCTSC) is beta. A divalent metal cation-binding residues include cysteine 5, cysteine 7, cysteine 13, cysteine 15, cysteine 19, cysteine 21, cysteine 24, cysteine 26, cysteine 29, cysteine 33, cysteine 34, cysteine 36, cysteine 37, cysteine 41, cysteine 44, cysteine 48, cysteine 50, and cysteine 57. The segment at 30–61 (KKSCCSCCPAGCAKCAQGCICKGASDKCSCCA) is alpha. Residue serine 58 is modified to Phosphoserine. Residues cysteine 59 and cysteine 60 each coordinate a divalent metal cation.

The protein belongs to the metallothionein superfamily. Type 1 family. Monomer.

Its function is as follows. Metallothioneins have a high content of cysteine residues that bind various heavy metals; these proteins are transcriptionally regulated by both heavy metals and glucocorticoids. The sequence is that of Metallothionein-1F (MT1F) from Sus scrofa (Pig).